The primary structure comprises 246 residues: Probable transcriptional regulatory protein Teth39_1009 (246 aa).

Residues 1 to 21 form a disordered region; that stretch reads MSGHSKWANIKHKKEKMDAKK.

The protein belongs to the TACO1 family.

It is found in the cytoplasm. This is Probable transcriptional regulatory protein Teth39_1009 from Thermoanaerobacter pseudethanolicus (strain ATCC 33223 / 39E) (Clostridium thermohydrosulfuricum).